The following is a 344-amino-acid chain: MIDWVTAVLPCLHVPVDAGRVLSVAPDGSVEWESVKFSRVTGSFQSSISVRSQGSDGNGKATHLYVDGNPSKWLQGHNIVGSDDLNGLMIAFYARMLSLLNIPHHLESYRQVLSGQYELKRVDINYMFELPTLIDVRSWLHAAEFKAKTRHGRPATAKGTLYFGKNSRRWSIKAYSKYDEVNCGKKAHGVPEEIKKTGLVEWSKNKLRLELTLRALQLTDINLNFAKNWSTETAYTVFKEYMGRIEMSGNTLLTDTQVINLPSALRMTYVCWKQGICVTDMVSRATYFRHRKVLKEFGIDIAVTVDRVDNSNVVPLIRVLEAKPASIPSQYDNLIFSSNRVSSF.

Belongs to the inovirus G2P protein family.

It catalyses the reaction ATP + (deoxyribonucleotide)n-3'-hydroxyl + 5'-phospho-(deoxyribonucleotide)m = (deoxyribonucleotide)n+m + AMP + diphosphate.. Its function is as follows. Isoform G2P plays an essential role in viral DNA replication. Binds the origin of replication and cleaves the dsDNA replicative form I (RFI) and becomes covalently bound to it via phosphotyrosine bond, generating the dsDNA replicative form II (RFII). In turn, viral DNA replication initiates at the 3'-OH of the cleavage site. After one round of rolling circle synthesis, protein G2P is linked to the newly synthesized ssDNA and joins the ends of the displaced strand to generate a circular single-stranded molecule ready to be packed into a virion. Functionally, isoform G10P protein binds to double-stranded DNA and prevents hydrolysis by nucleases. Additionally, G10P is an inhibitor of DNA replication and may have a role in the transition from semiconservative replicative form DNA replication to single-stranded DNA synthesis in the life cycle. The polypeptide is Replication-associated protein G2P (II) (Enterobacteria phage I2-2 (Bacteriophage I2-2)).